The sequence spans 548 residues: Natural resistance-associated macrophage protein 1 (548 aa).

Residues 1–11 show a composition bias toward polar residues; sequence MSGDTGPSKQG. The segment at 1–38 is disordered; it reads MSGDTGPSKQGGTRYGSISSPPSPGPQQAPPGGTYLGE. The Cytoplasmic segment spans residues 1-55; it reads MSGDTGPSKQGGTRYGSISSPPSPGPQQAPPGGTYLGEKIPIPDTESGAFSLRKL. A helical transmembrane segment spans residues 56 to 73; it reads WAFTGPGFLMSIAFLDPG. Over 74–82 the chain is Extracellular; sequence NIESDLQAG. The helical transmembrane segment at 83-102 threads the bilayer; sequence AVAGFKLLWVLLWATVLGLL. The Cytoplasmic segment spans residues 103–139; sequence CQRLAARLGVVTGKDLGEVCHLYYPKVPRILLWLTIE. The helical transmembrane segment at 140-160 threads the bilayer; the sequence is LAIVGSDMQEVIGTAIAFSLL. The Extracellular segment spans residues 161 to 164; that stretch reads SAGR. The helical transmembrane segment at 165–184 threads the bilayer; that stretch reads IPLWGGVLITVVDTFFFLFL. At 185–193 the chain is on the cytoplasmic side; it reads DNYGLRKLE. The helical transmembrane segment at 194 to 214 threads the bilayer; it reads AFFGFLITIMALTFGYEYVVA. Residues 215–237 are Extracellular-facing; sequence QPAQGALLQGLFLPSCRGCGQPE. Residues 238 to 256 form a helical membrane-spanning segment; it reads LLQAVGIIGAIIMPHNIYL. Over 257-284 the chain is Cytoplasmic; it reads HSSLVKSREVDRSRRADIREANMYFLIE. The chain crosses the membrane as a helical span at residues 285–304; sequence ATIALSVSFLINLFVMAVFG. The Extracellular portion of the chain corresponds to 305-346; the sequence is QAFYKQTNQAAFNICAKSSLHDYAPIFPRNNLTVAVDIYQGG. N-linked (GlcNAc...) asparagine glycosylation occurs at asparagine 335. A helical transmembrane segment spans residues 347 to 366; the sequence is VILGCLFGPAALYIWAVGLL. Residues 367–397 are Cytoplasmic-facing; the sequence is AAGQSSTMTGTYAGQFVMEGFLKLRWSRFAR. Residues 398 to 415 traverse the membrane as a helical segment; that stretch reads VLLTRSCAILPTVLLAVF. At 416–426 the chain is on the extracellular side; sequence RDLRDLSGLND. Residues 427–447 traverse the membrane as a helical segment; that stretch reads LLNVLQSLLLPFAVLPILTFT. The Cytoplasmic segment spans residues 448 to 463; sequence SMPALMQEFANGLVSK. The helical transmembrane segment at 464-485 threads the bilayer; sequence VITSSIMVLVCAVNLYFVISYV. Over 486 to 493 the chain is Extracellular; that stretch reads PSLPHPAY. A helical membrane pass occupies residues 494-513; the sequence is FSLVALLAAAYLGLTTYLVW. The Cytoplasmic portion of the chain corresponds to 514–548; it reads TCLITQGATFLAHNSHQRFLYGLPEEDQEKGRTSG.

It belongs to the NRAMP family.

Its subcellular location is the late endosome membrane. It is found in the lysosome membrane. The catalysed reaction is Zn(2+)(in) + H(+)(out) = Zn(2+)(out) + H(+)(in). It catalyses the reaction Fe(2+)(in) + H(+)(out) = Fe(2+)(out) + H(+)(in). It carries out the reaction Mn(2+)(in) + H(+)(out) = Mn(2+)(out) + H(+)(in). Macrophage-specific antiporter that fluxes metal ions in either direction against a proton gradient. Localized to late endosomal lysosomal membranes, delivers bivalent cations from the cytosol into these acidic compartments where they may directly affect antimicrobial activity. Involved in iron metabolism and host natural resistance to infection with intracellular parasites. Pathogen resistance involves sequestration of Fe(2+) and Mn(2+), cofactors of both prokaryotic and eukaryotic catalases and superoxide dismutases, not only to protect the macrophage against its own generation of reactive oxygen species, but to deny the cations to the pathogen for synthesis of its protective enzymes. This Bubalus bubalis (Domestic water buffalo) protein is Natural resistance-associated macrophage protein 1 (SLC11A1).